A 470-amino-acid chain; its full sequence is MTKVYITDTLSKSKVPLETLEPGVVKMYVCGPTVYNYIHIGNARPMVVFDALRRFLEFVGYRVIMVQNFTDIDDKIINEAKEWNVDWKTVADTFIAEYFHDAQLLGVRAANYHPRTTDFVKDIVEAIETMIKKDFAYPAENGDVYFSVRKLRDYGKLSGKNLDDLRAGARVDVNELKKDPLDFVLWKSAKPGEPTWDSPWCNGRPGWHIECSVMSQKLLGDMFDIHGGGEDLIFPHHEDEIAQSEALTGKPPAKYWMHNGMIIVRGDKMSKSLGNTFMVREAVRRYTKDGVKLFLLSKHYRSPMEFSDEILQDNMRAAQRVHNALNRFTEKYPYPLVPKIDEEMENFIDRFVEALSDDFNTPVALSILFDTVKELNKSMDEGNDERALKMYHLVKRIYGPVLGVFDSEIQKQQQVNSEQLDQLIQGIINLRNEYRKNKQFEIADKLRDALLNAKIKLLDTPEGTKYEIND.

Position 30 (Cys-30) interacts with Zn(2+). The 'HIGH' region motif lies at Pro-32–Asn-42. Positions 211, 236, and 240 each coordinate Zn(2+). The 'KMSKS' region signature appears at Lys-268–Ser-272. Lys-271 lines the ATP pocket.

Belongs to the class-I aminoacyl-tRNA synthetase family. Monomer. It depends on Zn(2+) as a cofactor.

It localises to the cytoplasm. It carries out the reaction tRNA(Cys) + L-cysteine + ATP = L-cysteinyl-tRNA(Cys) + AMP + diphosphate. In Fervidobacterium nodosum (strain ATCC 35602 / DSM 5306 / Rt17-B1), this protein is Cysteine--tRNA ligase.